The primary structure comprises 79 residues: Cell division protein ZapB (79 aa).

Residues 6–78 (FEKLEVKVQQ…LRALLGKMEE (73 aa)) are a coiled coil.

It belongs to the ZapB family. As to quaternary structure, homodimer. The ends of the coiled-coil dimer bind to each other, forming polymers. Interacts with FtsZ.

The protein localises to the cytoplasm. Its function is as follows. Non-essential, abundant cell division factor that is required for proper Z-ring formation. It is recruited early to the divisome by direct interaction with FtsZ, stimulating Z-ring assembly and thereby promoting cell division earlier in the cell cycle. Its recruitment to the Z-ring requires functional FtsA or ZipA. This chain is Cell division protein ZapB, found in Yersinia pseudotuberculosis serotype O:1b (strain IP 31758).